A 116-amino-acid chain; its full sequence is Small ribosomal subunit protein uS13 (116 aa).

The segment at 92-116 is disordered; it reads RRGLPVRGQNTKNNARTRKGTKRNR. The span at 106 to 116 shows a compositional bias: basic residues; it reads ARTRKGTKRNR.

This sequence belongs to the universal ribosomal protein uS13 family. In terms of assembly, part of the 30S ribosomal subunit. Forms a loose heterodimer with protein S19. Forms two bridges to the 50S subunit in the 70S ribosome.

In terms of biological role, located at the top of the head of the 30S subunit, it contacts several helices of the 16S rRNA. In the 70S ribosome it contacts the 23S rRNA (bridge B1a) and protein L5 of the 50S subunit (bridge B1b), connecting the 2 subunits; these bridges are implicated in subunit movement. Contacts the tRNAs in the A and P-sites. The sequence is that of Small ribosomal subunit protein uS13 from Lactobacillus acidophilus (strain ATCC 700396 / NCK56 / N2 / NCFM).